The sequence spans 459 residues: Elongation factor 1-alpha 2 (459 aa).

The tr-type G domain occupies lysine 5–threonine 242. The G1 stretch occupies residues glycine 14–serine 21. The interval glycine 70–aspartate 74 is G2. Residues aspartate 91 to glycine 94 form a G3 region. The segment at asparagine 153–aspartate 156 is G4. Residues serine 194–phenylalanine 196 are G5. A 5-glutamyl glycerylphosphorylethanolamine mark is found at glutamate 301 and glutamate 374.

It belongs to the TRAFAC class translation factor GTPase superfamily. Classic translation factor GTPase family. EF-Tu/EF-1A subfamily.

The protein localises to the cytoplasm. This protein promotes the GTP-dependent binding of aminoacyl-tRNA to the A-site of ribosomes during protein biosynthesis. This Oscheius tipulae protein is Elongation factor 1-alpha 2 (eft-2).